A 1469-amino-acid chain; its full sequence is MDYNPNLPPLGGGGVSMRRSISRSVSRASRNIEDIFSSGSRRTQSVNDDEEALKWAAIEKLPTYSRLRTTLMNAVVEDDVYGNQLMSKEVDVTKLDGEDRQKFIDMVFKVAEQDNERILTKLRNRIDRVGIKLPTVEVRYEHLTIKADCYTGNRSLPTLLNVVRNMGESALGMIGIQFAKKAQLTILKDISGVIKPGRMTLLLGPPSSGKTTLLLALAGKLDKSLQVSGDITYNGYQLDEFVPRKTSAYISQNDLHVGIMTVKETLDFSARCQGVGTRYDLLNELARREKDAGIFPEADVDLFMKASAAQGVKNSLVTDYTLKILGLDICKDTIVGDDMMRGISGGQKKRVTTGEMIVGPTKTLFMDEISTGLDSSTTFQIVKCLQQIVHLNEATVLMSLLQPAPETFDLFDDIILVSEGQIVYQGPRDNILEFFESFGFKCPERKGTADFLQEVTSKKDQEQYWVNPNRPYHYIPVSEFASRYKSFHVGTKMSNELAVPFDKSRGHKAALVFDKYSVSKRELLKSCWDKEWLLMQRNAFFYVFKTVQIVIIAAITSTLFLRTEMNTRNEGDANLYIGALLFGMIINMFNGFAEMAMMVSRLPVFYKQRDLLFYPSWTFSLPTFLLGIPSSILESTAWMVVTYYSIGFAPDASRFFKQFLLVFLIQQMAASLFRLIASVCRTMMIANTGGALTLLLVFLLGGFLLPKGKIPDWWGWAYWVSPLTYAFNGLVVNEMFAPRWMNKMASSNSTIKLGTMVLNTWDVYHQKNWYWISVGALLCFTALFNILFTLALTYLNPLGKKAGLLPEEENEDADQGKDPMRRSLSTADGNRRGEVAMGRMSRDSAAEASGGAGNKKGMVLPFTPLAMSFDDVKYFVDMPGEMRDQGVTETRLQLLKGVTGAFRPGVLTALMGVSGAGKTTLMDVLAGRKTGGYIEGDVRISGFPKVQETFARISGYCEQTDIHSPQVTVRESLIFSAFLRLPKEVGKDEKMMFVDQVMELVELDSLRDSIVGLPGVTGLSTEQRKRLTIAVELVANPSIIFMDEPTSGLDARAAAIVMRAVRNTVDTGRTVVCTIHQPSIDIFEAFDELMLMKRGGQVIYAGPLGQNSHKVVEYFESFPGVSKIPEKYNPATWMLEASSLAAELKLSVDFAELYNQSALHQRNKALVKELSVPPAGASDLYFATQFSQNTWGQFKSCLWKQWWTYWRSPDYNLVRFIFTLATSLLIGTVFWQIGGNRSNAGDLTMVIGALYAAIIFVGINNCSTVQPMVAVERTVFYRERAAGMYSAMPYAISQVTCELPYVLIQTVYYSLIVYAMVGFEWKAEKFFWFVFVSYFSFLYWTYYGMMTVSLTPNQQVASIFASAFYGIFNLFSGFFIPRPKIPKWWIWYYWICPVAWTVYGLIVSQYGDVETRIQVLGGAPDLTVKQYIEDHYGFQSDFMGPVAAVLIAFTVFFAFIFAFCIRTLNFQTR.

Met1 is modified (N-acetylmethionine). Residues Ser37, Ser38, and Ser40 each carry the phosphoserine modification. At Thr43 the chain carries Phosphothreonine. A Phosphoserine modification is found at Ser45. Residues 171-444 (LGMIGIQFAK…FESFGFKCPE (274 aa)) enclose the ABC transporter 1 domain. Residue 204 to 211 (GPPSSGKT) participates in ATP binding. The ABC transmembrane type-2 1 domain occupies 522–735 (ELLKSCWDKE…AFNGLVVNEM (214 aa)). The next 7 helical transmembrane spans lie at 540-560 (FFYVFKTVQIVIIAAITSTLF), 575-595 (LYIGALLFGMIINMFNGFAEM), 621-641 (LPTFLLGIPSSILESTAWMVV), 659-679 (FLLVFLIQQMAASLFRLIASV), 685-705 (IANTGGALTLLLVFLLGGFLL), 713-733 (WWGWAYWVSPLTYAFNGLVVN), and 772-792 (ISVGALLCFTALFNILFTLAL). The interval 806–852 (PEEENEDADQGKDPMRRSLSTADGNRRGEVAMGRMSRDSAAEASGGA) is disordered. 3 positions are modified to phosphoserine: Ser825, Ser841, and Ser844. The segment covering 829–845 (GNRRGEVAMGRMSRDSA) has biased composition (basic and acidic residues). Positions 867–1119 (MSFDDVKYFV…KVVEYFESFP (253 aa)) constitute an ABC transporter 2 domain. Residue 912–919 (GVSGAGKT) coordinates ATP. In terms of domain architecture, ABC transmembrane type-2 2 spans 1192 to 1406 (GQFKSCLWKQ…TVYGLIVSQY (215 aa)). 7 helical membrane passes run 1216-1236 (FIFTLATSLLIGTVFWQIGGN), 1239-1259 (NAGDLTMVIGALYAAIIFVGI), 1299-1319 (LPYVLIQTVYYSLIVYAMVGF), 1326-1346 (FFWFVFVSYFSFLYWTYYGMM), 1356-1376 (VASIFASAFYGIFNLFSGFFI), 1384-1404 (WWIWYYWICPVAWTVYGLIVS), and 1441-1461 (PVAAVLIAFTVFFAFIFAFCI).

It belongs to the ABC transporter superfamily. ABCG family. PDR (TC 3.A.1.205) subfamily. Interacts, in a Ca(2+)-dependent manner, with calmodulins CaM3, CaM7 and several CaM-like proteins (CML8, CML9, CML12/CAL4, CML37 and CML38), as well as with calcium regulated proteins CBL4/SOS3 and KIC. In terms of processing, phosphorylated upon perception of pathogen-associated molecular patterns (PAMPs); phosphorylations at Ser-40 and Ser-45, which likely regulate transport activity, are required for plant defense against pathogens (e.g. Blumeria graminis), but dispensable for recruitment to the host-pathogen interface and penetration sites. Phosphorylation at Ser-841 seems to be required for protein stability. As to expression, ubiquitous (at protein level). Higher levels in root hairs, stomata, epidermal cells, and hydathodes. Concentrated at the infection site of infected plants, including papillae and haustoria. Accumulates at the periphery of lateral root cap and root epidermal cells, especially in the outer lateral membrane domain facing the environment.

It is found in the cell membrane. The protein localises to the golgi apparatus. The protein resides in the trans-Golgi network membrane. Its subcellular location is the endoplasmic reticulum membrane. Together with ABCG37, regulates auxin homeostasis and responses by playing a dual role in coumarin (e.g. esculin) and in the auxin precursor indole 3-butyric acid (IBA) efflux transport, thus influencing cotyledons, roots and root hairs development. Mediates the transport (export into the apoplast) of distinct indole-type metabolites in distinct biological processes; a precursor of 4-O-beta-D-glucosyl-indol-3-yl formamide (4OGlcI3F), a pathogen-inducible tryptophan-derived compound (e.g. upon Blumeria graminis conidiospore inoculation), being a probable substrate in extracellular pathogen defense. Involved in the cellular detoxification of xenobiotics by promoting the excretion of some auxinic herbicides including 4-(2,4-dichlorophenoxy)butyric acid (2,4-DB) and other members of the phenoxyalkanoic acid family but not 2,4-dichlorophenoxyacetic acid (2,4-D). Mediates thymidine exudation in the rhizosphere. May be a transporter of lignin precursors during tracheary element differentiation. Key factor that controls the extent of cell death in the defense response. Necessary for both callose deposition and glucosinolate activation in response to pathogens. As a central component of nonhost resistance (NHR), required for limiting invasion by nonadapted pathogens including powdery mildews (e.g. Blumeria graminis and Erysiphe pisi), root-penetrating pathogenic fungi (e.g. Fusarium oxysporum), Phakopsora pachyrhizi and Colletotrichum gloeosporioides (anthracnose fungi), probably by sensing Ca(2+) via interactions with calmodulins (e.g. CaM7). Confers resistance to cadmium (Cd) and lead (Pb), probably as an efflux pump of Cd2+ or Cd conjugates, and possibly, of chemicals that mediate pathogen resistance. Promotes resistance to abiotic stresses (e.g. drought and salt stress) and favors general growth by preventing sodium accumulation in plants. Required for microbe-associated molecular patterns (MAMPs)- and salicylic acid (SA)-dependent hypersensitive cell death (HR), involving indole glucosinolate breakdown products (e.g. indole-3-acetonitrile), probably in a PEN2 myrosinase-dependent metabolic pathway, triggered by the recognition of effectors from incompatible pathogens including oomycetes and bacteria (e.g. AvrRpm1 and AvrRps4) and benzothiadiazole- (BTH), and leading to an induced protection against pathogens (e.g. Pseudomonas syringae pv. tomato DC3000, Golovinomyces orontii and Hyaloperonospora arabidopsidis). The polypeptide is ABC transporter G family member 36 (Arabidopsis thaliana (Mouse-ear cress)).